The following is a 506-amino-acid chain: 2,3-bisphosphoglycerate-independent phosphoglycerate mutase (506 aa).

Positions 13 and 63 each coordinate Mn(2+). S63 (phosphoserine intermediate) is an active-site residue. Residues H124, 153–154 (RD), R183, R189, 254–257 (RADR), and K330 contribute to the substrate site. 5 residues coordinate Mn(2+): D396, H400, D437, H438, and H456.

Belongs to the BPG-independent phosphoglycerate mutase family. In terms of assembly, monomer. Requires Mn(2+) as cofactor.

The enzyme catalyses (2R)-2-phosphoglycerate = (2R)-3-phosphoglycerate. It participates in carbohydrate degradation; glycolysis; pyruvate from D-glyceraldehyde 3-phosphate: step 3/5. Functionally, catalyzes the interconversion of 2-phosphoglycerate and 3-phosphoglycerate. This is 2,3-bisphosphoglycerate-independent phosphoglycerate mutase from Cereibacter sphaeroides (strain ATCC 17029 / ATH 2.4.9) (Rhodobacter sphaeroides).